Reading from the N-terminus, the 195-residue chain is Probable WRKY transcription factor 56 (195 aa).

Polar residues predominate over residues 1-10 (MEGVDNTNPM). Disordered regions lie at residues 1–20 (MEGV…ENNN) and 70–93 (EMGG…KGKG). The WRKY DNA-binding region spans 108–173 (SDDDVLDDGY…YEGVHNHPCE (66 aa)).

This sequence belongs to the WRKY group II-c family.

The protein localises to the nucleus. Functionally, transcription factor. Interacts specifically with the W box (5'-(T)TGAC[CT]-3'), a frequently occurring elicitor-responsive cis-acting element. The sequence is that of Probable WRKY transcription factor 56 (WRKY56) from Arabidopsis thaliana (Mouse-ear cress).